Consider the following 520-residue polypeptide: Probable helicase MJECL08 (520 aa).

ATP is bound by residues Arg162, 171-176, and 501-502; these read GAGKSN and KI.

It belongs to the HerA family.

The catalysed reaction is Couples ATP hydrolysis with the unwinding of duplex DNA at the replication fork by translocating in the 5'-3' direction. This creates two antiparallel DNA single strands (ssDNA). The leading ssDNA polymer is the template for DNA polymerase III holoenzyme which synthesizes a continuous strand.. It catalyses the reaction ATP + H2O = ADP + phosphate + H(+). It carries out the reaction Couples ATP hydrolysis with the unwinding of duplex DNA by translocating in the 3'-5' direction.. Functionally, a probably bidirectional DNA helicase. The chain is Probable helicase MJECL08 from Methanocaldococcus jannaschii (strain ATCC 43067 / DSM 2661 / JAL-1 / JCM 10045 / NBRC 100440) (Methanococcus jannaschii).